Here is a 1537-residue protein sequence, read N- to C-terminus: DNA (cytosine-5)-methyltransferase 1 (1537 aa).

Pro residues predominate over residues 1–13; the sequence is MPARSAPPPPALP. Disordered stretches follow at residues 1 to 34 and 97 to 232; these read MPAR…SEKE and RASN…DEKR. A DMAP1-binding domain is found at 8-105; the sequence is PPPALPPALR…SRASNGCAGN (98 aa). Basic and acidic residues predominate over residues 21-34; that stretch reads RDLERDEDSLSEKE. Low complexity predominate over residues 129 to 154; it reads SSSSSSSSSSSSSSSSSSSSSLLPAP. The span at 171 to 194 shows a compositional bias: polar residues; sequence SPASSRVTRSSGRQPTILSVFSKG. The tract at residues 182–194 is interaction with PCNA; the sequence is GRQPTILSVFSKG. The span at 215–227 shows a compositional bias: acidic residues; that stretch reads KDEEEEEELEEKE. Cysteine 263, cysteine 266, and histidine 329 together coordinate Zn(2+). Serine 420 is modified (phosphoserine). The CXXC-type zinc finger occupies 558–604; the sequence is NAMKRRRCGVCEVCQQPECGKCKACQNMVKFGGSGRSKQACLQRRCP. Positions 565, 568, 571, 576, 579, 582, 598, and 603 each coordinate Zn(2+). The tract at residues 614-638 is disordered; that stretch reads DEEVDDNIPEMPSPKKMLQGRKKKQ. 2 consecutive BAH domains span residues 667–791 and 883–1011; these read ETLE…ETPP and HYRK…EDPP. A disordered region spans residues 1006–1050; that stretch reads SFEDPPNHARSSGNKGKGKGKGKGKGKGKSSTTCEQSEPEPTELK. A run of 7 repeats spans residues 1020-1021, 1022-1023, 1024-1025, 1026-1027, 1028-1029, 1030-1031, and 1032-1033. The interval 1020–1035 is 8 X 2 AA tandem repeats of K-G; it reads KGKGKGKGKGKGKGKS. The segment covering 1021-1033 has biased composition (basic residues); it reads GKGKGKGKGKGKG. An 8; approximate repeat occupies 1034–1035; sequence KS. The SAM-dependent MTase C5-type domain occupies 1054–1513; that stretch reads LRTLDVFSGC…LEIRACVGAR (460 aa). Residues serine 1061, 1065–1066, 1083–1084, 1105–1106, and cysteine 1106 contribute to the S-adenosyl-L-methionine site; these read GL, EM, and DC. The active site involves cysteine 1141. Positions 1492 and 1494 each coordinate S-adenosyl-L-methionine. The segment at 1518 to 1537 is disordered; it reads SGAAVAPPAPEKMEMTAAAD.

This sequence belongs to the class I-like SAM-binding methyltransferase superfamily. C5-methyltransferase family. Homodimer. Interacts with PCNA. As to expression, testis and lung.

It is found in the nucleus. The catalysed reaction is a 2'-deoxycytidine in DNA + S-adenosyl-L-methionine = a 5-methyl-2'-deoxycytidine in DNA + S-adenosyl-L-homocysteine + H(+). Its function is as follows. Methylates CpG residues. Preferentially methylates hemimethylated DNA. It is responsible for maintaining methylation patterns established in development. Mediates transcriptional repression by direct binding to HDAC2. Plays a role in promoter hypermethylation and transcriptional silencing of tumor suppressor genes (TSGs) or other tumor-related genes. Also required to maintain a transcriptionally repressive state of genes in undifferentiated embryonic stem cells (ESCs). Associates at promoter regions of tumor suppressor genes (TSGs) leading to their gene silencing. The polypeptide is DNA (cytosine-5)-methyltransferase 1 (DNMT1) (Gallus gallus (Chicken)).